A 78-amino-acid chain; its full sequence is RNA-binding protein Hfq (78 aa).

Residues 10–69 enclose the Sm domain; the sequence is DPFLNALRREHVPVSIYLVNGIKLQGQVESFDQYVVLLKNTVTQMVYKHAISTVVPARPV.

Belongs to the Hfq family. As to quaternary structure, homohexamer.

Functionally, RNA chaperone that binds small regulatory RNA (sRNAs) and mRNAs to facilitate mRNA translational regulation in response to envelope stress, environmental stress and changes in metabolite concentrations. Also binds with high specificity to tRNAs. This is RNA-binding protein Hfq from Dechloromonas aromatica (strain RCB).